Here is a 476-residue protein sequence, read N- to C-terminus: Sulfate adenylyltransferase subunit 1 (476 aa).

The 216-residue stretch at 24–239 (KSMLRFLTCG…VLENVDIDQK (216 aa)) folds into the tr-type G domain. Positions 33–40 (GSVDDGKS) are G1. 33-40 (GSVDDGKS) contacts GTP. The G2 stretch occupies residues 91-95 (GITID). A G3 region spans residues 112 to 115 (DTPG). GTP-binding positions include 112–116 (DTPGH) and 167–170 (NKMD). The segment at 167–170 (NKMD) is G4. Residues 205–207 (SAL) are G5.

The protein belongs to the TRAFAC class translation factor GTPase superfamily. Classic translation factor GTPase family. CysN/NodQ subfamily. As to quaternary structure, heterodimer composed of CysD, the smaller subunit, and CysN.

The catalysed reaction is sulfate + ATP + H(+) = adenosine 5'-phosphosulfate + diphosphate. The protein operates within sulfur metabolism; hydrogen sulfide biosynthesis; sulfite from sulfate: step 1/3. In terms of biological role, with CysD forms the ATP sulfurylase (ATPS) that catalyzes the adenylation of sulfate producing adenosine 5'-phosphosulfate (APS) and diphosphate, the first enzymatic step in sulfur assimilation pathway. APS synthesis involves the formation of a high-energy phosphoric-sulfuric acid anhydride bond driven by GTP hydrolysis by CysN coupled to ATP hydrolysis by CysD. This chain is Sulfate adenylyltransferase subunit 1, found in Vibrio atlanticus (strain LGP32) (Vibrio splendidus (strain Mel32)).